Consider the following 347-residue polypeptide: 4-hydroxy-2-oxovalerate aldolase 2 (347 aa).

In terms of domain architecture, Pyruvate carboxyltransferase spans 7 to 259; sequence VRITDTSLRD…KTGIDFFDIA (253 aa). 15–16 lines the substrate pocket; that stretch reads RD. Asp-16 contacts Mn(2+). The active-site Proton acceptor is the His-19. Residues Ser-169 and His-198 each coordinate substrate. Mn(2+)-binding residues include His-198 and His-200. Residue Tyr-289 participates in substrate binding.

This sequence belongs to the 4-hydroxy-2-oxovalerate aldolase family.

The enzyme catalyses (S)-4-hydroxy-2-oxopentanoate = acetaldehyde + pyruvate. The sequence is that of 4-hydroxy-2-oxovalerate aldolase 2 from Mycobacterium ulcerans (strain Agy99).